The primary structure comprises 453 residues: Bifunctional protein GlmU (453 aa).

The pyrophosphorylase stretch occupies residues 1-231 (MERTCLAVIL…EIEMTGCNNR (231 aa)). UDP-N-acetyl-alpha-D-glucosamine contacts are provided by residues 10-13 (LAAG), Lys-24, Gln-77, 82-83 (GT), 105-107 (YGD), Gly-143, Glu-157, Asn-172, and Asn-229. Position 107 (Asp-107) interacts with Mg(2+). Mg(2+) is bound at residue Asn-229. The segment at 232 to 252 (AELAVIERFWQERRRREMMLA) is linker. The N-acetyltransferase stretch occupies residues 253 to 453 (GVTMIAPETV…AIKAAKKAEA (201 aa)). Residues Arg-318 and Lys-336 each coordinate UDP-N-acetyl-alpha-D-glucosamine. His-348 functions as the Proton acceptor in the catalytic mechanism. Residues Tyr-351 and Asn-362 each contribute to the UDP-N-acetyl-alpha-D-glucosamine site. Acetyl-CoA is bound by residues Ala-365, 371 to 372 (NY), Ser-390, Ser-408, and Arg-425.

This sequence in the N-terminal section; belongs to the N-acetylglucosamine-1-phosphate uridyltransferase family. It in the C-terminal section; belongs to the transferase hexapeptide repeat family. Homotrimer. Mg(2+) is required as a cofactor.

It is found in the cytoplasm. The catalysed reaction is alpha-D-glucosamine 1-phosphate + acetyl-CoA = N-acetyl-alpha-D-glucosamine 1-phosphate + CoA + H(+). It catalyses the reaction N-acetyl-alpha-D-glucosamine 1-phosphate + UTP + H(+) = UDP-N-acetyl-alpha-D-glucosamine + diphosphate. Its pathway is nucleotide-sugar biosynthesis; UDP-N-acetyl-alpha-D-glucosamine biosynthesis; N-acetyl-alpha-D-glucosamine 1-phosphate from alpha-D-glucosamine 6-phosphate (route II): step 2/2. The protein operates within nucleotide-sugar biosynthesis; UDP-N-acetyl-alpha-D-glucosamine biosynthesis; UDP-N-acetyl-alpha-D-glucosamine from N-acetyl-alpha-D-glucosamine 1-phosphate: step 1/1. It functions in the pathway bacterial outer membrane biogenesis; LPS lipid A biosynthesis. Its function is as follows. Catalyzes the last two sequential reactions in the de novo biosynthetic pathway for UDP-N-acetylglucosamine (UDP-GlcNAc). The C-terminal domain catalyzes the transfer of acetyl group from acetyl coenzyme A to glucosamine-1-phosphate (GlcN-1-P) to produce N-acetylglucosamine-1-phosphate (GlcNAc-1-P), which is converted into UDP-GlcNAc by the transfer of uridine 5-monophosphate (from uridine 5-triphosphate), a reaction catalyzed by the N-terminal domain. The protein is Bifunctional protein GlmU of Rhizobium etli (strain ATCC 51251 / DSM 11541 / JCM 21823 / NBRC 15573 / CFN 42).